The following is a 503-amino-acid chain: Glucose-6-phosphate 1-dehydrogenase (503 aa).

NADP(+)-binding positions include 14 to 21, Arg49, and Lys158; that span reads GASGDLSK. D-glucose 6-phosphate-binding positions include Lys158, 188–192, Glu226, and Asp245; that span reads HYLGK. His250 functions as the Proton acceptor in the catalytic mechanism. Lys341 is a binding site for NADP(+). Lys344 lines the D-glucose 6-phosphate pocket. The NADP(+) site is built by Lys350, Arg354, and Arg376. Gln378 contacts D-glucose 6-phosphate. NADP(+) contacts are provided by residues 384–386, Arg471, and Tyr487; that span reads YLK.

Belongs to the glucose-6-phosphate dehydrogenase family.

The enzyme catalyses D-glucose 6-phosphate + NADP(+) = 6-phospho-D-glucono-1,5-lactone + NADPH + H(+). Its pathway is carbohydrate degradation; pentose phosphate pathway; D-ribulose 5-phosphate from D-glucose 6-phosphate (oxidative stage): step 1/3. Functionally, catalyzes the rate-limiting step of the oxidative pentose-phosphate pathway, which represents a route for the dissimilation of carbohydrates besides glycolysis. The main function of this enzyme is to provide reducing power (NADPH) and pentose phosphates for fatty acid and nucleic acid synthesis. The G6PDH activity is required to cope with hydrogen peroxide and potassium bisulfite stresses and plays a role in adaptation to conditions used in wine fermentations. This is Glucose-6-phosphate 1-dehydrogenase from Hanseniaspora uvarum (Yeast).